The sequence spans 516 residues: Flavin-dependent halogenase armH2 (516 aa).

FAD-binding residues include Gly-16, Ala-19, and Glu-49. Chloride is bound by residues Ser-328 and Gly-329. Ile-330 provides a ligand contact to FAD. The interval 440 to 475 (PQANGNGAAKQDAVPAPIPVALSSGAGPEKDAKRRE) is disordered.

This sequence belongs to the flavin-dependent halogenase family.

It catalyses the reaction melleolide F + FADH2 + chloride + O2 = 6'-chloromelleolide F + FAD + 2 H2O + H(+). Functionally, flavin-dependent halogenase involved in the biosynthesis of melleolides, a range of antifungal and phytotoxic polyketide derivatives composed of an orsellinic acid (OA) moiety esterified to various sesquiterpene alcohols. The halogenase catalyzes the transfer of a single chlorine atom to the melleolide backbone, resulting in a 6'-chloromelleolide product. The enzyme acts on free substrate and does not depend on carrier-protein-dependent acceptor molecules. The protein is Flavin-dependent halogenase armH2 of Armillaria mellea (Honey mushroom).